The chain runs to 20 residues: Luminal-binding protein (20 aa).

It belongs to the heat shock protein 70 family.

The protein resides in the endoplasmic reticulum lumen. In terms of biological role, probably plays a role in facilitating the assembly of multimeric protein complexes inside the ER. The protein is Luminal-binding protein of Phaseolus vulgaris (Kidney bean).